The primary structure comprises 58 residues: Large ribosomal subunit protein uL24 (58 aa).

Belongs to the universal ribosomal protein uL24 family. As to quaternary structure, part of the 50S ribosomal subunit.

In terms of biological role, one of two assembly initiator proteins, it binds directly to the 5'-end of the 23S rRNA, where it nucleates assembly of the 50S subunit. Its function is as follows. One of the proteins that surrounds the polypeptide exit tunnel on the outside of the subunit. In Spiroplasma citri, this protein is Large ribosomal subunit protein uL24 (rplX).